The following is a 901-amino-acid chain: HTH-type transcriptional regulator MalT (901 aa).

39 to 46 (SPAGYGKT) is an ATP binding site. Residues 829-894 (ELIRTSPLTQ…DAVQHAQQLL (66 aa)) enclose the HTH luxR-type domain. The H-T-H motif DNA-binding region spans 853-872 (NEQIAGELEVAATTIKTHIR).

It belongs to the MalT family. In terms of assembly, monomer in solution. Oligomerizes to an active state in the presence of the positive effectors ATP and maltotriose.

Its activity is regulated as follows. Activated by ATP and maltotriose, which are both required for DNA binding. Functionally, positively regulates the transcription of the maltose regulon whose gene products are responsible for uptake and catabolism of malto-oligosaccharides. Specifically binds to the promoter region of its target genes, recognizing a short DNA motif called the MalT box. This is HTH-type transcriptional regulator MalT from Escherichia coli (strain K12 / MC4100 / BW2952).